Here is a 1706-residue protein sequence, read N- to C-terminus: Probable ATP-dependent RNA helicase DDX60-like (1706 aa).

The tract at residues arginine 545–glutamine 580 is disordered. Polar residues predominate over residues serine 551 to histidine 564. Over residues glutamine 565–serine 574 the composition is skewed to basic residues. The region spanning leucine 752–lysine 919 is the Helicase ATP-binding domain. Alanine 765–threonine 772 provides a ligand contact to ATP. The short motif at aspartate 869–histidine 872 is the DEAH box element. Residues aspartate 1205 to leucine 1354 form the Helicase C-terminal domain.

This sequence belongs to the helicase family.

It carries out the reaction ATP + H2O = ADP + phosphate + H(+). The sequence is that of Probable ATP-dependent RNA helicase DDX60-like from Homo sapiens (Human).